Reading from the N-terminus, the 252-residue chain is NDR1/HIN1-like protein 6 (252 aa).

Residues 1-46 are disordered; that stretch reads MSQHQKIYPVQDPEAATARPTAPLVPRGSSRSEHGDPSKVPLNQRP. Residues 70-90 form a helical membrane-spanning segment; that stretch reads FCFLLLLVVAVGASIGILYLV. Residues Asn121, Asn154, Asn166, and Asn180 are each glycosylated (N-linked (GlcNAc...) asparagine).

Homodimer. Highly expressed in seeds and at lower level in roots and senescing leaves. Expressed in leaves and flowers.

Its subcellular location is the cell membrane. It localises to the cytoplasm. It is found in the cytosol. Its function is as follows. Plays an important role in the abiotic stresses-induced abscisic acid (ABA) signaling and biosynthesis. Acts as a positive regulator of ABA-mediated seed germination inhibition. Functions downstream of ABF2/AREB1, ABF4/AREB2 and ABF3. This Arabidopsis thaliana (Mouse-ear cress) protein is NDR1/HIN1-like protein 6.